Consider the following 372-residue polypeptide: NAD(P)H-quinone oxidoreductase subunit 1 (372 aa).

Helical transmembrane passes span 27-47 (TIWL…GVLV), 65-85 (PEYI…KLVF), 97-117 (WLFT…YLIV), 128-148 (LGIG…GLLM), 176-196 (LALA…IDIV), 204-224 (ILGW…IAAL), 249-269 (YAGM…VLSS), 308-328 (GLGL…AILL), and 351-371 (VGLV…FAFG).

This sequence belongs to the complex I subunit 1 family. NDH-1 is composed of at least 11 different subunits.

It localises to the cellular thylakoid membrane. It catalyses the reaction a plastoquinone + NADH + (n+1) H(+)(in) = a plastoquinol + NAD(+) + n H(+)(out). It carries out the reaction a plastoquinone + NADPH + (n+1) H(+)(in) = a plastoquinol + NADP(+) + n H(+)(out). Functionally, NDH-1 shuttles electrons from an unknown electron donor, via FMN and iron-sulfur (Fe-S) centers, to quinones in the respiratory and/or the photosynthetic chain. The immediate electron acceptor for the enzyme in this species is believed to be plastoquinone. Couples the redox reaction to proton translocation, and thus conserves the redox energy in a proton gradient. The chain is NAD(P)H-quinone oxidoreductase subunit 1 from Acaryochloris marina (strain MBIC 11017).